The following is a 749-amino-acid chain: Basic juvenile hormone-suppressible protein 2 (749 aa).

Positions 1 to 14 are cleaved as a signal peptide; the sequence is MRAVLLFVVSLAAL.

Belongs to the hemocyanin family. As to expression, fat body, and hemolymph of larvae.

The protein is Basic juvenile hormone-suppressible protein 2 (BJSP-2) of Trichoplusia ni (Cabbage looper).